Consider the following 445-residue polypeptide: GTPase Der (445 aa).

2 consecutive EngA-type G domains span residues 3–167 and 180–353; these read PVIA…YAGQ and IKIA…AAAM. GTP contacts are provided by residues 9–16, 56–60, 119–122, 186–193, 233–237, and 298–301; these read GRPNVGKS, DTGGF, NKAE, DTAGL, and NKWD. In terms of domain architecture, KH-like spans 354 to 438; that stretch reads AKLPTPKLTR…PLRIEFRSSN (85 aa).

It belongs to the TRAFAC class TrmE-Era-EngA-EngB-Septin-like GTPase superfamily. EngA (Der) GTPase family. As to quaternary structure, associates with the 50S ribosomal subunit.

Its function is as follows. GTPase that plays an essential role in the late steps of ribosome biogenesis. In Burkholderia ambifaria (strain ATCC BAA-244 / DSM 16087 / CCUG 44356 / LMG 19182 / AMMD) (Burkholderia cepacia (strain AMMD)), this protein is GTPase Der.